Here is a 308-residue protein sequence, read N- to C-terminus: Ribosomal RNA large subunit methyltransferase F (308 aa).

This sequence belongs to the methyltransferase superfamily. METTL16/RlmF family.

The protein localises to the cytoplasm. It carries out the reaction adenosine(1618) in 23S rRNA + S-adenosyl-L-methionine = N(6)-methyladenosine(1618) in 23S rRNA + S-adenosyl-L-homocysteine + H(+). Its function is as follows. Specifically methylates the adenine in position 1618 of 23S rRNA. The protein is Ribosomal RNA large subunit methyltransferase F of Escherichia fergusonii (strain ATCC 35469 / DSM 13698 / CCUG 18766 / IAM 14443 / JCM 21226 / LMG 7866 / NBRC 102419 / NCTC 12128 / CDC 0568-73).